Consider the following 537-residue polypeptide: MPFKCIFLTGGVVSSLGKGLTAASLALLLERQNLKVAMLKLDPYLNVDPGTMNPYEHGEVYVTNDGIETDLDLGHYHRFSSVNLSKYSTATSGQIYARVIKREREGVYLGSTVQVIPHITNEIIEVILECAKENQPDVLIVEIGGTVGDIESLPFLEAIRQFRCEHAANCFSIHMTYVPYLKAAGEVKTKPTQHSVQSLRGIGIIPDAILCRSETPLSNEVKKKISLFCNVPDSAVFNVVDVEHSIYEMPLMLSREKISTFITEKLGLFTKQEDLSDWKILIERLRNPLPNKVRIGLVGKYVQHKDAYKSVFESITHAALSLNCAVDILPLDSEDPHFLEALEECDGCLVPGGFGIRGWEGKITAAKLCRERGIPYFGICLGMQVLVVEYARNVMDLEKANSTEMDQDTPHPVICMMDGQAALVATGGTMRLGAYPCTLSPGTKVYEAYGQSEIMERHRHRYEVNFDYIQQLKDHGLNIVGRCPQQGLCEIVETENHPWMVGVQFHPEFLSKLITPHPLFVGFIQAALLYSKNKSHV.

The segment at 1–268 (MPFKCIFLTG…STFITEKLGL (268 aa)) is amidoligase domain. Serine 14 contributes to the CTP binding site. Serine 14 contributes to the UTP binding site. Position 15–20 (15–20 (SLGKGL)) interacts with ATP. Tyrosine 55 contributes to the L-glutamine binding site. Aspartate 72 provides a ligand contact to ATP. Mg(2+)-binding residues include aspartate 72 and glutamate 142. Residues 149-151 (DIE), 188-193 (KTKPTQ), and lysine 224 contribute to the CTP site. Residues 188–193 (KTKPTQ) and lysine 224 contribute to the UTP site. In terms of domain architecture, Glutamine amidotransferase type-1 spans 294–533 (RIGLVGKYVQ…IQAALLYSKN (240 aa)). Glycine 353 contacts L-glutamine. The active-site Nucleophile; for glutamine hydrolysis is the cysteine 380. Residues 381-384 (LGMQ), glutamate 404, and arginine 461 contribute to the L-glutamine site. Residues histidine 506 and glutamate 508 contribute to the active site.

The protein belongs to the CTP synthase family. As to quaternary structure, homotetramer.

The enzyme catalyses UTP + L-glutamine + ATP + H2O = CTP + L-glutamate + ADP + phosphate + 2 H(+). It catalyses the reaction L-glutamine + H2O = L-glutamate + NH4(+). It carries out the reaction UTP + NH4(+) + ATP = CTP + ADP + phosphate + 2 H(+). It functions in the pathway pyrimidine metabolism; CTP biosynthesis via de novo pathway; CTP from UDP: step 2/2. Allosterically activated by GTP, when glutamine is the substrate; GTP has no effect on the reaction when ammonia is the substrate. The allosteric effector GTP functions by stabilizing the protein conformation that binds the tetrahedral intermediate(s) formed during glutamine hydrolysis. Inhibited by the product CTP, via allosteric rather than competitive inhibition. Catalyzes the ATP-dependent amination of UTP to CTP with either L-glutamine or ammonia as the source of nitrogen. Regulates intracellular CTP levels through interactions with the four ribonucleotide triphosphates. This is CTP synthase from Chlamydia caviae (strain ATCC VR-813 / DSM 19441 / 03DC25 / GPIC) (Chlamydophila caviae).